Here is a 295-residue protein sequence, read N- to C-terminus: GTPase Era (295 aa).

The Era-type G domain occupies 7 to 176; it reads KTVSVCIIGR…ITSKAKIAPW (170 aa). The G1 stretch occupies residues 15–22; it reads GRPNSGKS. 15-22 serves as a coordination point for GTP; sequence GRPNSGKS. Positions 41–45 are G2; the sequence is QTTRS. The G3 stretch occupies residues 62 to 65; that stretch reads DTPG. GTP contacts are provided by residues 62–66 and 124–127; these read DTPGI and NKIE. Residues 124 to 127 are G4; it reads NKIE. The interval 152 to 154 is G5; it reads ISA. The KH type-2 domain occupies 204–281; that stretch reads LQQELPYKLT…HLFLFVKVRE (78 aa).

It belongs to the TRAFAC class TrmE-Era-EngA-EngB-Septin-like GTPase superfamily. Era GTPase family. As to quaternary structure, monomer.

Its subcellular location is the cytoplasm. The protein resides in the cell inner membrane. An essential GTPase that binds both GDP and GTP, with rapid nucleotide exchange. Plays a role in 16S rRNA processing and 30S ribosomal subunit biogenesis and possibly also in cell cycle regulation and energy metabolism. The polypeptide is GTPase Era (Rickettsia canadensis (strain McKiel)).